Consider the following 232-residue polypeptide: 5'-methylthioadenosine/S-adenosylhomocysteine nucleosidase (232 aa).

Catalysis depends on glutamate 12, which acts as the Proton acceptor. Residues glycine 78, isoleucine 152, and 173 to 174 (ME) each bind substrate. Residue aspartate 197 is the Proton donor of the active site.

Belongs to the PNP/UDP phosphorylase family. MtnN subfamily. In terms of assembly, homodimer.

The enzyme catalyses S-adenosyl-L-homocysteine + H2O = S-(5-deoxy-D-ribos-5-yl)-L-homocysteine + adenine. It carries out the reaction S-methyl-5'-thioadenosine + H2O = 5-(methylsulfanyl)-D-ribose + adenine. It catalyses the reaction 5'-deoxyadenosine + H2O = 5-deoxy-D-ribose + adenine. Its pathway is amino-acid biosynthesis; L-methionine biosynthesis via salvage pathway; S-methyl-5-thio-alpha-D-ribose 1-phosphate from S-methyl-5'-thioadenosine (hydrolase route): step 1/2. In terms of biological role, catalyzes the irreversible cleavage of the glycosidic bond in both 5'-methylthioadenosine (MTA) and S-adenosylhomocysteine (SAH/AdoHcy) to adenine and the corresponding thioribose, 5'-methylthioribose and S-ribosylhomocysteine, respectively. Also cleaves 5'-deoxyadenosine, a toxic by-product of radical S-adenosylmethionine (SAM) enzymes, into 5-deoxyribose and adenine. Thus, is required for in vivo function of the radical SAM enzymes biotin synthase and lipoic acid synthase, that are inhibited by 5'-deoxyadenosine accumulation. In Salmonella choleraesuis (strain SC-B67), this protein is 5'-methylthioadenosine/S-adenosylhomocysteine nucleosidase.